Consider the following 82-residue polypeptide: Metallothionein-like protein 2A (82 aa).

Belongs to the metallothionein superfamily. Type 15 family. In terms of tissue distribution, expressed in stems, leaves, rachis, inflorescences and seeds.

Metallothioneins have a high content of cysteine residues that bind various heavy metals. This chain is Metallothionein-like protein 2A (MT2A), found in Oryza sativa subsp. japonica (Rice).